The sequence spans 417 residues: Type IV inositol polyphosphate 5-phosphatase 9 (417 aa).

2 catalytic regions span residues 258 to 273 (DRVIFLGDLNYRISLP) and 339 to 354 (KKRAPAWCDRIIWYGN).

This sequence belongs to the inositol polyphosphate 5-phosphatase family. In terms of tissue distribution, specifically expressed in roots.

The catalysed reaction is a 1,2-diacyl-sn-glycero-3-phospho-(1D-myo-inositol-4,5-bisphosphate) + H2O = a 1,2-diacyl-sn-glycero-3-phospho-(1D-myo-inositol 4-phosphate) + phosphate. The enzyme catalyses a 1,2-diacyl-sn-glycero-3-phospho-(1D-myo-inositol-3,4,5-trisphosphate) + H2O = a 1,2-diacyl-sn-glycero-3-phospho-(1D-myo-inositol-3,4-bisphosphate) + phosphate. Its function is as follows. Has phosphatase activity toward PtdIns(4,5)P2 and at a lower extent toward PtdIns(3,4,5)P3 but not toward Ins(1,4,5)P3. Functions in salt stress response by regulating reactive oxygen species (ROS) production, endocytosis, Ca(2+) influx and stress-responsive genes expression. This is Type IV inositol polyphosphate 5-phosphatase 9 from Arabidopsis thaliana (Mouse-ear cress).